The primary structure comprises 123 residues: SPbeta prophage-derived uncharacterized protein YorE (123 aa).

The protein is SPbeta prophage-derived uncharacterized protein YorE (yorE) of Bacillus subtilis (strain 168).